A 42-amino-acid polypeptide reads, in one-letter code: Putative protein RNF216-like (42 aa).

The chain is Putative protein RNF216-like (RNF216P1) from Homo sapiens (Human).